Consider the following 336-residue polypeptide: Mitochondrial amidoxime reducing component 2 (336 aa).

The N-terminal 35 residues, 1 to 35, are a transit peptide targeting the mitochondrion; the sequence is MGAAGSSALARLGLPALPGPRWLGVAALGLAAVAL. Glycyl lysine isopeptide (Lys-Gly) (interchain with G-Cter in ubiquitin) cross-links involve residues Lys138, Lys144, Lys173, Lys187, Lys287, and Lys294. Positions 188 to 334 constitute an MOSC domain; it reads ARASNEIFPS…LKVGDPVYQM (147 aa).

As to quaternary structure, component of a complex composed of cytochrome b5, NADH-cytochrome b5 reductase (CYB5R3) and MTARC2. Mo-molybdopterin serves as cofactor. Post-translationally, ubiquitinated by PRKN during mitophagy, leading to its degradation and enhancement of mitophagy. Deubiquitinated by USP30.

The protein resides in the mitochondrion outer membrane. Its subcellular location is the peroxisome. The enzyme catalyses N(omega)-hydroxy-L-arginine + 2 Fe(II)-[cytochrome b5] + 2 H(+) = L-arginine + 2 Fe(III)-[cytochrome b5] + H2O. Catalyzes the reduction of N-oxygenated molecules, acting as a counterpart of cytochrome P450 and flavin-containing monooxygenases in metabolic cycles. As a component of prodrug-converting system, reduces a multitude of N-hydroxylated prodrugs particularly amidoximes, leading to increased drug bioavailability. May be involved in mitochondrial N(omega)-hydroxy-L-arginine (NOHA) reduction, regulating endogenous nitric oxide levels and biosynthesis. Postulated to cleave the N-OH bond of N-hydroxylated substrates in concert with electron transfer from NADH to cytochrome b5 reductase then to cytochrome b5, the ultimate electron donor that primes the active site for substrate reduction. This Bos taurus (Bovine) protein is Mitochondrial amidoxime reducing component 2 (MTARC2).